A 143-amino-acid polypeptide reads, in one-letter code: Sporulation-specific cell division protein SsgB (143 aa).

Belongs to the SsgA family. In terms of assembly, interacts with SsgA. Interacts with FtsZ (via N-terminus).

The protein resides in the cell septum. Its function is as follows. Involved in sporulation-specific cell division. Required for early stages of sporulation. Important in the process of growth cessation prior to sporulation-specific cell division. Recruits cell division protein FtsZ to the future septum sites and tethers the contractile ring structure (Z ring) to the cytoplasmic membrane during sporulation. Stimulates polymerization and filament length of FtsZ in vitro. The protein is Sporulation-specific cell division protein SsgB of Salinispora tropica (strain ATCC BAA-916 / DSM 44818 / JCM 13857 / NBRC 105044 / CNB-440).